The following is a 188-amino-acid chain: ATP synthase subunit p18, mitochondrial (188 aa).

A mitochondrion-targeting transit peptide spans 1–18 (MMRRVYSPVFCSVAAARF). PPR repeat units follow at residues 36 to 70 (TNTA…PPDI), 75 to 109 (ATLQ…EMQH), and 116 to 146 (NEES…METE).

F-type ATPases have 2 components, F(1) - the catalytic core - and F(o) - the membrane proton channel. F(1) has five subunits: alpha(3), beta(3), gamma(1), delta(1), epsilon(1), plus the additional subunit P18 (Tb427.05.1710) that is not present in F(1)F(o) ATP synthase from metazoa. Subunit P18 (Tb927.5.1710) interacts with the alpha subunit with a 1:1 stoichiometry; the interaction is direct. Subunit gamma is part of the central stalk. F(o) has three main subunits: a, b and c. The trypanosomal ATPase complex contains additional subunits that are not present in the F(1)F(o) ATP synthase from metazoa.

It is found in the mitochondrion. The protein localises to the mitochondrion inner membrane. Mitochondrial membrane ATP synthase (F(1)F(o) ATP synthase) produces ATP from ADP in the presence of a proton gradient across the membrane which is generated by electron transport complexes of the respiratory chain. F-type ATPases consist of two structural domains, F(1) - containing the extramembraneous catalytic core, and F(o) - containing the membrane proton channel, linked together by a central stalk and a peripheral stalk. During catalysis, ATP synthesis in the catalytic domain of F(1) is coupled via a rotary mechanism of the central stalk subunits to proton translocation. Subunits alpha and beta form the catalytic core in F(1). Rotation of the central stalk against the surrounding alpha(3)beta(3) subunits leads to hydrolysis of ATP in three separate catalytic sites on the beta subunits. Contrary to the procyclic, insect form that requires F(1)F(o) ATP synthase for ATP synthesis, the bloodstream form relies on ATP hydrolysis by F(1)F(o) ATP synthase to maintain its mitochondrial membrane potential. The sequence is that of ATP synthase subunit p18, mitochondrial from Trypanosoma brucei brucei.